A 208-amino-acid chain; its full sequence is Large ribosomal subunit protein uL3 (208 aa).

The disordered stretch occupies residues 116-148 (GFQGVIKRHGQSRGPMAHGSRYHRRPGSMGPVA).

The protein belongs to the universal ribosomal protein uL3 family. In terms of assembly, part of the 50S ribosomal subunit. Forms a cluster with proteins L14 and L19.

In terms of biological role, one of the primary rRNA binding proteins, it binds directly near the 3'-end of the 23S rRNA, where it nucleates assembly of the 50S subunit. This is Large ribosomal subunit protein uL3 from Streptococcus pyogenes serotype M6 (strain ATCC BAA-946 / MGAS10394).